A 140-amino-acid chain; its full sequence is Mercuric transport protein MerC (140 aa).

The Cytoplasmic portion of the chain corresponds to 2 to 10; the sequence is GLMTRIADK. Residues 11–31 form a helical membrane-spanning segment; the sequence is TGALGSVVSAMGCAACFPALA. Hg(2+)-binding residues include G22 and A25. The Periplasmic segment spans residues 32 to 46; that stretch reads SFGAAIGLGFLSQYE. Residues 47–67 traverse the membrane as a helical segment; that stretch reads GLFISRLLPLFAALAFLANAL. The Cytoplasmic portion of the chain corresponds to 68–78; it reads GWFSHRQWLRS. The helical transmembrane segment at 79 to 99 threads the bilayer; sequence LLGMIGPAIVFAATVWLLGNW. Residues 100–106 lie on the Periplasmic side of the membrane; it reads WTANLMY. The chain crosses the membrane as a helical span at residues 107–127; sequence VGLALMIGVSIWDFVSPAHRR. Over 128–140 the chain is Cytoplasmic; it reads CGPDGCELPAKRL.

The protein localises to the cell inner membrane. With respect to regulation, uptake of Hg(2+) is decreased by iodoacetamide and iodoacetate, and is completely inhibited by the thiol-modifying reagent N-ethylmaleimide (NEM). Functionally, involved in mercuric ion uptake and binding. MerC-mediated Hg(2+) uptake does not require MerP. This Shigella flexneri protein is Mercuric transport protein MerC.